Consider the following 310-residue polypeptide: Thiamine-monophosphate kinase (310 aa).

Mg(2+)-binding residues include Asp26, Thr40, Ser41, and Asp42. Asp49 is a binding site for substrate. 2 residues coordinate Mg(2+): Asp70 and Asp118. Residues 117-118 (GD) and Arg141 each bind ATP. Asp202 contributes to the Mg(2+) binding site. Residue Ser204 coordinates ATP. Residue Asp205 participates in Mg(2+) binding. 2 residues coordinate substrate: Glu251 and Trp299.

It belongs to the thiamine-monophosphate kinase family.

It catalyses the reaction thiamine phosphate + ATP = thiamine diphosphate + ADP. It functions in the pathway cofactor biosynthesis; thiamine diphosphate biosynthesis; thiamine diphosphate from thiamine phosphate: step 1/1. Catalyzes the ATP-dependent phosphorylation of thiamine-monophosphate (TMP) to form thiamine-pyrophosphate (TPP), the active form of vitamin B1. This chain is Thiamine-monophosphate kinase, found in Pyrococcus abyssi (strain GE5 / Orsay).